The chain runs to 186 residues: ATP synthase subunit delta (186 aa).

Belongs to the ATPase delta chain family. As to quaternary structure, F-type ATPases have 2 components, F(1) - the catalytic core - and F(0) - the membrane proton channel. F(1) has five subunits: alpha(3), beta(3), gamma(1), delta(1), epsilon(1). CF(0) has four main subunits: a(1), b(1), b'(1) and c(10-14). The alpha and beta chains form an alternating ring which encloses part of the gamma chain. F(1) is attached to F(0) by a central stalk formed by the gamma and epsilon chains, while a peripheral stalk is formed by the delta, b and b' chains.

Its subcellular location is the cell inner membrane. Functionally, f(1)F(0) ATP synthase produces ATP from ADP in the presence of a proton or sodium gradient. F-type ATPases consist of two structural domains, F(1) containing the extramembraneous catalytic core and F(0) containing the membrane proton channel, linked together by a central stalk and a peripheral stalk. During catalysis, ATP synthesis in the catalytic domain of F(1) is coupled via a rotary mechanism of the central stalk subunits to proton translocation. In terms of biological role, this protein is part of the stalk that links CF(0) to CF(1). It either transmits conformational changes from CF(0) to CF(1) or is implicated in proton conduction. The sequence is that of ATP synthase subunit delta from Rhodopseudomonas palustris (strain ATCC BAA-98 / CGA009).